Reading from the N-terminus, the 269-residue chain is Undecaprenyl-diphosphatase (269 aa).

6 consecutive transmembrane segments (helical) span residues 43-63 (KGKV…CWEY), 82-102 (FILN…LLHG), 108-128 (LFSS…ILLV), 188-208 (ATEF…FYDV), 222-242 (MFAV…KTLI), and 249-269 (DFKG…AYYW).

This sequence belongs to the UppP family.

It is found in the cell inner membrane. It catalyses the reaction di-trans,octa-cis-undecaprenyl diphosphate + H2O = di-trans,octa-cis-undecaprenyl phosphate + phosphate + H(+). Functionally, catalyzes the dephosphorylation of undecaprenyl diphosphate (UPP). Confers resistance to bacitracin. The chain is Undecaprenyl-diphosphatase from Methylobacillus flagellatus (strain ATCC 51484 / DSM 6875 / VKM B-1610 / KT).